Consider the following 264-residue polypeptide: S-adenosylmethionine decarboxylase proenzyme (264 aa).

S113 (schiff-base intermediate with substrate; via pyruvic acid) is an active-site residue. A Pyruvic acid (Ser); by autocatalysis modification is found at S113. The active-site Proton acceptor; for processing activity is the H118. Residue C141 is the Proton donor; for catalytic activity of the active site.

This sequence belongs to the prokaryotic AdoMetDC family. Type 2 subfamily. As to quaternary structure, heterooctamer of four alpha and four beta chains arranged as a tetramer of alpha/beta heterodimers. Requires pyruvate as cofactor. In terms of processing, is synthesized initially as an inactive proenzyme. Formation of the active enzyme involves a self-maturation process in which the active site pyruvoyl group is generated from an internal serine residue via an autocatalytic post-translational modification. Two non-identical subunits are generated from the proenzyme in this reaction, and the pyruvate is formed at the N-terminus of the alpha chain, which is derived from the carboxyl end of the proenzyme. The post-translation cleavage follows an unusual pathway, termed non-hydrolytic serinolysis, in which the side chain hydroxyl group of the serine supplies its oxygen atom to form the C-terminus of the beta chain, while the remainder of the serine residue undergoes an oxidative deamination to produce ammonia and the pyruvoyl group blocking the N-terminus of the alpha chain.

It catalyses the reaction S-adenosyl-L-methionine + H(+) = S-adenosyl 3-(methylsulfanyl)propylamine + CO2. It participates in amine and polyamine biosynthesis; S-adenosylmethioninamine biosynthesis; S-adenosylmethioninamine from S-adenosyl-L-methionine: step 1/1. Catalyzes the decarboxylation of S-adenosylmethionine to S-adenosylmethioninamine (dcAdoMet), the propylamine donor required for the synthesis of the polyamines spermine and spermidine from the diamine putrescine. The protein is S-adenosylmethionine decarboxylase proenzyme of Hahella chejuensis (strain KCTC 2396).